A 244-amino-acid chain; its full sequence is Deoxynucleotide monophosphate kinase (244 aa).

Lys-10 is a dGMP binding site. Residues Arg-11, Gly-13, Asp-15, and Thr-16 each coordinate ATP. Residues Ile-36, Lys-37, Arg-70, Arg-137, Gly-144, Thr-145, Val-149, Trp-157, Asp-180, Arg-182, Gln-183, Glu-186, and Thr-213 each coordinate dGMP.

Belongs to the dNMP kinase family. In terms of assembly, homodimer. It depends on Mg(2+) as a cofactor.

It catalyses the reaction dTMP + ATP = dTDP + ADP. The catalysed reaction is dGMP + ATP = dGDP + ADP. The enzyme catalyses 5-hydroxymethyl-dCMP + ATP = 5-hydroxymethyl-dCDP + ADP. Its function is as follows. Allows the synthesis of deoxyribonucleoside triphosphates necessary for the rapid viral DNA replication. Phosphorylates dGMP, dTMP and 5-hydroxymethyl-dCMP (hmdCMP) while excluding dCMP and dAMP. The phosphorylation of 5-hydroxymethyl-dCMP represents the first step in the replacement of cytosine by hydroxymethylcytosine in new viral DNA genomes. The sequence is that of Deoxynucleotide monophosphate kinase (1) from Escherichia phage RB69 (Bacteriophage RB69).